A 499-amino-acid polypeptide reads, in one-letter code: Bestrophin homolog 22 (499 aa).

The next 4 membrane-spanning stretches (helical) occupy residues 29–49, 77–97, 235–255, and 267–287; these read WKAV…ISCI, IPLT…WGSI, LVYP…CLIG, and GIDL…MGWM. The segment covering 417–432 has biased composition (basic and acidic residues); it reads HNAKHAKQRGLERANS. Disordered regions lie at residues 417–455 and 474–499; these read HNAK…ANGS and TSNP…TSRH.

Belongs to the anion channel-forming bestrophin (TC 1.A.46) family. Calcium-sensitive chloride channel subfamily. In terms of assembly, forms oligomers.

Its subcellular location is the cell membrane. Its function is as follows. Forms chloride channels. This is Bestrophin homolog 22 (best-22) from Caenorhabditis elegans.